Consider the following 148-residue polypeptide: D-aminoacyl-tRNA deacylase (148 aa).

A Gly-cisPro motif, important for rejection of L-amino acids motif is present at residues 137–138 (GP).

Belongs to the DTD family. In terms of assembly, homodimer.

It is found in the cytoplasm. It catalyses the reaction glycyl-tRNA(Ala) + H2O = tRNA(Ala) + glycine + H(+). It carries out the reaction a D-aminoacyl-tRNA + H2O = a tRNA + a D-alpha-amino acid + H(+). Its function is as follows. An aminoacyl-tRNA editing enzyme that deacylates mischarged D-aminoacyl-tRNAs. Also deacylates mischarged glycyl-tRNA(Ala), protecting cells against glycine mischarging by AlaRS. Acts via tRNA-based rather than protein-based catalysis; rejects L-amino acids rather than detecting D-amino acids in the active site. By recycling D-aminoacyl-tRNA to D-amino acids and free tRNA molecules, this enzyme counteracts the toxicity associated with the formation of D-aminoacyl-tRNA entities in vivo and helps enforce protein L-homochirality. This Ligilactobacillus salivarius (strain UCC118) (Lactobacillus salivarius) protein is D-aminoacyl-tRNA deacylase.